The sequence spans 423 residues: F-box/LRR-repeat protein 2 (423 aa).

One can recognise an F-box domain in the interval 9-55 (GLINKKLPKELLLRIFSFLDIVTLCRCAQISKAWNILALDGSNWQRV). 13 LRR repeats span residues 61–87 (QTDV…SLRG), 88–113 (CIGV…NLNG), 114–139 (CTKI…DLTS), 140–165 (CVSV…NLSW), 166–191 (CDQI…LLRG), 192–217 (CTQL…NLQS), 218–243 (CSRI…CLSG), 244–269 (CSNL…EAAR), 270–295 (CSHL…DLEE), 296–321 (CVLI…SLSH), 322–350 (CELI…ELDN), 351–375 (CLLV…ELYD), and 376–401 (CQQV…AYFA). The interaction with Calmodulin stretch occupies residues 80–90 (LRKLSLRGCIG). Lysine 201 is covalently cross-linked (Glycyl lysine isopeptide (Lys-Gly) (interchain with G-Cter in ubiquitin)). Residue threonine 404 is modified to Phosphothreonine; by GSK3-beta. Cysteine 420 is lipidated: S-geranylgeranyl cysteine. Positions 420–423 (CVIL) match the CAAX motif motif.

As to quaternary structure, part of the SCF (SKP1-CUL1-F-box) E3 ubiquitin-protein ligase complex SCF(FBXL2) composed of CUL1, SKP1, RBX1 and FBXL2. Interacts with calmodulin; may antagonize substrate ubiquitination by SCF(FBXL2). May interact with PIK3R1. Interacts with PTPN13. Post-translationally, phosphorylated by GSK-beta (GSK3B), promoting recognition by FBXO3, leading to its ubiquitination by the SCF(FBXO3) complex. Ubiquitinated at Lys-201 by the SCF(FBXO3) complex in response to lipopolysaccharide (LPS), leading to its degradation by the proteasome.

It localises to the membrane. The protein operates within protein modification; protein ubiquitination. In terms of biological role, calcium-activated substrate recognition component of the SCF (SKP1-cullin-F-box protein) E3 ubiquitin-protein ligase complex, SCF(FBXL2), which mediates the ubiquitination and subsequent proteasomal degradation of target proteins. Unlike many F-box proteins, FBXL2 does not seem to target phosphodegron within its substrates but rather calmodulin-binding motifs and is thereby antagonized by calmodulin. This is the case for the cyclins CCND2 and CCND3 which polyubiquitination and subsequent degradation are inhibited by calmodulin. Through CCND2 and CCND3 degradation induces cell-cycle arrest in G(0). SCF(FBXL2) also mediates PIK3R2 ubiquitination and proteasomal degradation thereby regulating phosphatidylinositol 3-kinase signaling and autophagy. PCYT1A monoubiquitination by SCF(FBXL2) and subsequent degradation regulates synthesis of phosphatidylcholine, which is utilized for formation of membranes and of pulmonary surfactant. The SCF(FBXL2) complex acts as a regulator of inflammation by mediating ubiquitination and degradation of TRAF proteins (TRAF1, TRAF2, TRAF3, TRAF4, TRAF5 and TRAF6). The SCF(FBXL2) complex acts as a negative regulator of the NLRP3 inflammasome by mediating ubiquitination and degradation of NLRP3. The polypeptide is F-box/LRR-repeat protein 2 (Mus musculus (Mouse)).